Here is a 305-residue protein sequence, read N- to C-terminus: N-acetylneuraminate lyase (305 aa).

Residues threonine 51 and threonine 52 each contribute to the aceneuramate site. Tyrosine 143 functions as the Proton donor in the catalytic mechanism. Lysine 173 acts as the Schiff-base intermediate with substrate in catalysis. Aceneuramate-binding residues include threonine 175, glycine 197, aspartate 199, glutamate 200, and serine 216.

This sequence belongs to the DapA family. NanA subfamily. Homotetramer.

It is found in the cytoplasm. The enzyme catalyses aceneuramate = aldehydo-N-acetyl-D-mannosamine + pyruvate. The protein operates within amino-sugar metabolism; N-acetylneuraminate degradation. Catalyzes the cleavage of N-acetylneuraminic acid (sialic acid) to form pyruvate and N-acetylmannosamine via a Schiff base intermediate. It prevents sialic acids from being recycled and returning to the cell surface. Involved in the N-glycolylneuraminic acid (Neu5Gc) degradation pathway. In Xenopus tropicalis (Western clawed frog), this protein is N-acetylneuraminate lyase.